We begin with the raw amino-acid sequence, 385 residues long: MSFGRLESQLRLKVFGRLQVIRQHLRMSNHTVKDGGCLLTKAGCAGVITLNRPKALNALNLGMIRQIYPQLKLWEEDPETYLVIIKGAGGKAFCAGGDIRAVTDAGKVGDRLAQDFFREEYILNNAIGTCKKPYVAVIDGITMGGGVGLSVHGHFRVASEKTLFAMPETAIGLFPDVGGGYFLPRLTGKLGLYLALTGFRLKGSDVQKAGIATHFVESEKLSSLEQDLVAMKSPSKENVADVLDSYQKKSYAAQDKPFVLAENMDKINSLFSGNTVEEIMENLKCDGSSFAMKQLQTLSTMSPTSLKITFRQLKEGASMSLQEVLTMEYRLSQACMNGHDFYEGVRAVLIDKDQKAKWKPESLEEVTEDYIDSCFTSLGSRDLKL.

Residues glutamate 120, glycine 145, glutamate 168, and aspartate 176 each contribute to the substrate site.

It belongs to the enoyl-CoA hydratase/isomerase family.

It localises to the mitochondrion. The catalysed reaction is 3-hydroxy-2-methylpropanoyl-CoA + H2O = 3-hydroxy-2-methylpropanoate + CoA + H(+). The protein operates within amino-acid degradation; L-valine degradation. Its function is as follows. Hydrolyzes 3-hydroxyisobutyryl-CoA (HIBYL-CoA), a saline catabolite. Has high activity toward isobutyryl-CoA. Could be an isobutyryl-CoA dehydrogenase that functions in valine catabolism. Also hydrolyzes 3-hydroxypropanoyl-CoA. The polypeptide is 3-hydroxyisobutyryl-CoA hydrolase, mitochondrial (hibch) (Xenopus laevis (African clawed frog)).